Reading from the N-terminus, the 147-residue chain is Ubiquitin-conjugating enzyme E2-16 kDa (147 aa).

The region spanning 1 to 147 is the UBC core domain; that stretch reads MAFKRINKEL…AREWTRKYAI (147 aa). Cys-107 serves as the catalytic Glycyl thioester intermediate.

Belongs to the ubiquitin-conjugating enzyme family.

The enzyme catalyses S-ubiquitinyl-[E1 ubiquitin-activating enzyme]-L-cysteine + [E2 ubiquitin-conjugating enzyme]-L-cysteine = [E1 ubiquitin-activating enzyme]-L-cysteine + S-ubiquitinyl-[E2 ubiquitin-conjugating enzyme]-L-cysteine.. It participates in protein modification; protein ubiquitination. In terms of biological role, catalyzes the covalent attachment of ubiquitin to other proteins. May also mediate selective proteolysis pathways. The chain is Ubiquitin-conjugating enzyme E2-16 kDa (UBC1) from Colletotrichum gloeosporioides (Anthracnose fungus).